Reading from the N-terminus, the 506-residue chain is Maturase K (506 aa).

This sequence belongs to the intron maturase 2 family. MatK subfamily.

It localises to the plastid. The protein localises to the chloroplast. Functionally, usually encoded in the trnK tRNA gene intron. Probably assists in splicing its own and other chloroplast group II introns. This Lathyrus sativus (White vetchling) protein is Maturase K.